The sequence spans 362 residues: Probable endopolygalacturonase B (362 aa).

The signal sequence occupies residues 1–20 (MHFLQNAFVAATMGAAPAAA). Positions 21-25 (TPLEK) are excised as a propeptide. The cysteines at positions 28 and 43 are disulfide-linked. 6 PbH1 repeats span residues 155–184 (ADHLTITDVTIDDSAGTSKGHNTDAFDIGQ), 185–206 (STYITIDGATVYNQDDCLAINS), 207–227 (GEHITFTNGYCDGGHGLSIGS), 236–257 (VNDVTISNSKVVNSQNGVRIKT), 265–287 (VENVKFEDITLSDISKYGIVVEQ), and 299–344 (TNGV…DVTG). Aspartate 199 (proton donor) is an active-site residue. A disulfide bridge connects residues cysteine 201 and cysteine 217. The active site involves histidine 221. A disulfide bond links cysteine 327 and cysteine 332. N-linked (GlcNAc...) asparagine glycosylation is present at asparagine 334. The cysteines at positions 351 and 360 are disulfide-linked.

It belongs to the glycosyl hydrolase 28 family.

It is found in the secreted. The enzyme catalyses (1,4-alpha-D-galacturonosyl)n+m + H2O = (1,4-alpha-D-galacturonosyl)n + (1,4-alpha-D-galacturonosyl)m.. Functionally, involved in maceration and soft-rotting of plant tissue. Hydrolyzes the 1,4-alpha glycosidic bonds of de-esterified pectate in the smooth region of the plant cell wall. The chain is Probable endopolygalacturonase B (pgaB) from Aspergillus kawachii (White koji mold).